Here is a 648-residue protein sequence, read N- to C-terminus: NADP-dependent malic enzyme, chloroplastic (648 aa).

Residues 1 to 61 (MISLNSSFLE…VDSAVRDVNA (61 aa)) constitute a chloroplast transit peptide. Y195 serves as the catalytic Proton donor. R248 serves as a coordination point for NAD(+). K266 (proton acceptor) is an active-site residue. Residues E339, D340, and D363 each contribute to the a divalent metal cation site. Position 363 (D363) interacts with NAD(+). 392–408 (LFLGAGEAGTGIAELIA) is an NADP(+) binding site. Position 504 (N504) interacts with NAD(+).

The protein belongs to the malic enzymes family. In terms of assembly, homotetramer. The cofactor is Mg(2+). Mn(2+) is required as a cofactor.

It is found in the plastid. Its subcellular location is the chloroplast. The enzyme catalyses (S)-malate + NADP(+) = pyruvate + CO2 + NADPH. It carries out the reaction oxaloacetate + H(+) = pyruvate + CO2. The protein operates within photosynthesis; C4 acid pathway. Functionally, the chloroplastic ME isoform decarboxylates malate shuttled from neighboring mesophyll cells. The CO(2) released is then refixed by ribulose-bisphosphate carboxylase. This pathway eliminates the photorespiratory loss of CO(2) that occurs in most plants. This chain is NADP-dependent malic enzyme, chloroplastic (MOD1), found in Flaveria trinervia (Clustered yellowtops).